Reading from the N-terminus, the 312-residue chain is DNA-directed RNA polymerase subunit alpha (312 aa).

Positions 1-229 (MLQYQIDRIE…ELFQPLATVT (229 aa)) are alpha N-terminal domain (alpha-NTD). Residues 236-312 (IEPEPSAEAQ…ISIPQSRTSV (77 aa)) form an alpha C-terminal domain (alpha-CTD) region.

This sequence belongs to the RNA polymerase alpha chain family. In terms of assembly, in cyanobacteria the RNAP catalytic core is composed of 2 alpha, 1 beta, 1 beta', 1 gamma and 1 omega subunit. When a sigma factor is associated with the core the holoenzyme is formed, which can initiate transcription.

It carries out the reaction RNA(n) + a ribonucleoside 5'-triphosphate = RNA(n+1) + diphosphate. Functionally, DNA-dependent RNA polymerase catalyzes the transcription of DNA into RNA using the four ribonucleoside triphosphates as substrates. In Synechococcus sp. (strain CC9311), this protein is DNA-directed RNA polymerase subunit alpha.